Here is a 685-residue protein sequence, read N- to C-terminus: Diphthine--ammonia ligase (685 aa).

In the C-terminal section; belongs to the RutC family. The protein in the N-terminal section; belongs to the Diphthine--ammonia ligase family. As to quaternary structure, interacts with elongation factor 2 (eEF-2; EFT1 or EFT2).

The protein localises to the cytoplasm. It carries out the reaction diphthine-[translation elongation factor 2] + NH4(+) + ATP = diphthamide-[translation elongation factor 2] + AMP + diphosphate + H(+). The protein operates within protein modification; peptidyl-diphthamide biosynthesis. Its function is as follows. Amidase that catalyzes the last step of diphthamide biosynthesis using ammonium and ATP. Diphthamide biosynthesis consists in the conversion of an L-histidine residue in the translation elongation factor eEF-2 (EFT1 or EFT2) to diphthamide. This Saccharomyces cerevisiae (strain ATCC 204508 / S288c) (Baker's yeast) protein is Diphthine--ammonia ligase (DPH6).